A 244-amino-acid polypeptide reads, in one-letter code: rRNA adenine N-6-methyltransferase (244 aa).

Residues asparagine 11, isoleucine 13, glycine 38, glutamate 59, aspartate 84, and asparagine 101 each coordinate S-adenosyl-L-methionine.

It belongs to the class I-like SAM-binding methyltransferase superfamily. rRNA adenine N(6)-methyltransferase family.

It carries out the reaction adenosine(2085) in 23S rRNA + 2 S-adenosyl-L-methionine = N(6)-dimethyladenosine(2085) in 23S rRNA + 2 S-adenosyl-L-homocysteine + 2 H(+). Functionally, this protein produces a dimethylation of the adenine residue at position 2085 in 23S rRNA, resulting in reduced affinity between ribosomes and macrolide-lincosamide-streptogramin B antibiotics. This is rRNA adenine N-6-methyltransferase (ermC') from Bacillus subtilis.